Reading from the N-terminus, the 440-residue chain is 2-methylisoborneol synthase (440 aa).

2 disordered regions span residues 1–33 (MPDS…IPSA) and 46–74 (LHPP…TVTG). Pro residues-rich tracts occupy residues 9-29 (TPPP…PAPV) and 50-63 (VTVP…PPAP). Residues Asp-197, Asp-198, Glu-202, Asn-345, Ser-349, and Glu-353 each coordinate Mg(2+).

Belongs to the terpene synthase family. 2-methylisoborneol synthase subfamily. Mg(2+) serves as cofactor.

It carries out the reaction (E)-2-methylgeranyl diphosphate + H2O = 2-methylisoborneol + diphosphate. Its function is as follows. Catalyzes the cyclization of 2-methylgeranyl diphosphate (2-MeGPP) to 2-methylisoborneol (2-MIB), which likely involves the intermediacy of 2-methyllinalyl diphosphate. Is also able to catalyze the cyclization of geranyl diphosphate (GPP), albeit with much lower efficiency, leading to the formation of a complex mixture of cyclic monoterpenes, consisting of alpha-pinene (6%), beta-pinene (23%), limonene (32%), gamma-terpinene (29%), and delta-terpinene (10%). This chain is 2-methylisoborneol synthase, found in Streptomyces coelicolor (strain ATCC BAA-471 / A3(2) / M145).